A 194-amino-acid chain; its full sequence is Peptidyl-tRNA hydrolase (194 aa).

TRNA is bound at residue Tyr17. His22 (proton acceptor) is an active-site residue. Tyr68, Asn70, and Asn116 together coordinate tRNA.

This sequence belongs to the PTH family. As to quaternary structure, monomer.

Its subcellular location is the cytoplasm. It catalyses the reaction an N-acyl-L-alpha-aminoacyl-tRNA + H2O = an N-acyl-L-amino acid + a tRNA + H(+). In terms of biological role, hydrolyzes ribosome-free peptidyl-tRNAs (with 1 or more amino acids incorporated), which drop off the ribosome during protein synthesis, or as a result of ribosome stalling. Catalyzes the release of premature peptidyl moieties from peptidyl-tRNA molecules trapped in stalled 50S ribosomal subunits, and thus maintains levels of free tRNAs and 50S ribosomes. The chain is Peptidyl-tRNA hydrolase from Marinomonas sp. (strain MWYL1).